Here is a 310-residue protein sequence, read N- to C-terminus: Fructose-bisphosphate aldolase/6-deoxy-5-ketofructose 1-phosphate synthase (310 aa).

Residues 48-49 (DQ), histidine 53, aspartate 57, and tryptophan 180 each bind substrate. The active-site Proton donor is tyrosine 182. Substrate contacts are provided by residues arginine 184, 213–215 (KVN), 241–243 (AGG), and 270–271 (GR). Catalysis depends on lysine 213, which acts as the Schiff-base intermediate with dihydroxyacetone-P. Catalysis depends on lysine 213, which acts as the Schiff-base intermediate with substrate.

Belongs to the DeoC/FbaB aldolase family.

It carries out the reaction beta-D-fructose 1,6-bisphosphate = D-glyceraldehyde 3-phosphate + dihydroxyacetone phosphate. The catalysed reaction is beta-D-fructose 1,6-bisphosphate + methylglyoxal = 1-deoxy-D-threo-hexo-2,5-diulose 6-phosphate + D-glyceraldehyde 3-phosphate. It catalyses the reaction beta-D-fructose 1-phosphate + methylglyoxal = 1-deoxy-D-threo-hexo-2,5-diulose 6-phosphate + D-glyceraldehyde. It participates in aromatic compound metabolism. Functionally, catalyzes the transaldolization of either fructose-1-P or fructose-1,6-bisphosphate with methylglyoxal to produce 6-deoxy-5-ketofructose-1-phosphate (DKFP). Also catalyzes the reversible aldol condensation of dihydroxyacetone phosphate (DHAP or glycerone-phosphate) with glyceraldehyde 3-phosphate (G3P or GAP) to produce fructose 1,6-bisphosphate (FBP). This Methanocaldococcus jannaschii (strain ATCC 43067 / DSM 2661 / JAL-1 / JCM 10045 / NBRC 100440) (Methanococcus jannaschii) protein is Fructose-bisphosphate aldolase/6-deoxy-5-ketofructose 1-phosphate synthase.